A 255-amino-acid chain; its full sequence is Hemin import ATP-binding protein HmuV (255 aa).

The 237-residue stretch at Leu-2–Asp-238 folds into the ABC transporter domain. Gly-34–Ser-41 provides a ligand contact to ATP.

The protein belongs to the ABC transporter superfamily. Heme (hemin) importer (TC 3.A.1.14.5) family. The complex is composed of two ATP-binding proteins (HmuV), two transmembrane proteins (HmuU) and a solute-binding protein (HmuT).

It localises to the cell inner membrane. In terms of biological role, part of the ABC transporter complex HmuTUV involved in hemin import. Responsible for energy coupling to the transport system. This Pseudomonas putida (strain ATCC 47054 / DSM 6125 / CFBP 8728 / NCIMB 11950 / KT2440) protein is Hemin import ATP-binding protein HmuV.